We begin with the raw amino-acid sequence, 651 residues long: Acetyl-coenzyme A synthetase (651 aa).

CoA-binding positions include 189–192, T311, and N335; that span reads RGGK. ATP-binding positions include 387-389, 411-416, D500, and R515; these read GEP and DTWWQT. S523 serves as a coordination point for CoA. R526 is an ATP binding site. Residues V537, H539, and V542 each coordinate Mg(2+). CoA is bound at residue R584. K609 is subject to N6-acetyllysine.

Belongs to the ATP-dependent AMP-binding enzyme family. Requires Mg(2+) as cofactor. Acetylated. Deacetylation by the SIR2-homolog deacetylase activates the enzyme.

It carries out the reaction acetate + ATP + CoA = acetyl-CoA + AMP + diphosphate. Functionally, catalyzes the conversion of acetate into acetyl-CoA (AcCoA), an essential intermediate at the junction of anabolic and catabolic pathways. AcsA undergoes a two-step reaction. In the first half reaction, AcsA combines acetate with ATP to form acetyl-adenylate (AcAMP) intermediate. In the second half reaction, it can then transfer the acetyl group from AcAMP to the sulfhydryl group of CoA, forming the product AcCoA. The protein is Acetyl-coenzyme A synthetase of Rhizobium etli (strain ATCC 51251 / DSM 11541 / JCM 21823 / NBRC 15573 / CFN 42).